We begin with the raw amino-acid sequence, 398 residues long: Acetate kinase (398 aa).

N7 contacts Mg(2+). Residue K14 coordinates ATP. Substrate is bound at residue R91. D148 functions as the Proton donor/acceptor in the catalytic mechanism. ATP is bound by residues 208–212 (HIGNG), 283–285 (DMR), and 331–335 (GVGEN). E385 contacts Mg(2+).

Belongs to the acetokinase family. As to quaternary structure, homodimer. Requires Mg(2+) as cofactor. Mn(2+) serves as cofactor.

It is found in the cytoplasm. The catalysed reaction is acetate + ATP = acetyl phosphate + ADP. It functions in the pathway metabolic intermediate biosynthesis; acetyl-CoA biosynthesis; acetyl-CoA from acetate: step 1/2. Functionally, catalyzes the formation of acetyl phosphate from acetate and ATP. Can also catalyze the reverse reaction. This is Acetate kinase from Porphyromonas gingivalis (strain ATCC BAA-308 / W83).